The sequence spans 482 residues: ATP synthase subunit beta, chloroplastic (482 aa).

162-169 (GGAGVGKT) provides a ligand contact to ATP.

Belongs to the ATPase alpha/beta chains family. In terms of assembly, F-type ATPases have 2 components, CF(1) - the catalytic core - and CF(0) - the membrane proton channel. CF(1) has five subunits: alpha(3), beta(3), gamma(1), delta(1), epsilon(1). CF(0) has four main subunits: a(1), b(1), b'(1) and c(9-12).

The protein resides in the plastid. Its subcellular location is the chloroplast thylakoid membrane. The catalysed reaction is ATP + H2O + 4 H(+)(in) = ADP + phosphate + 5 H(+)(out). Produces ATP from ADP in the presence of a proton gradient across the membrane. The catalytic sites are hosted primarily by the beta subunits. This is ATP synthase subunit beta, chloroplastic from Pleurastrum terricola (Filamentous green alga).